The chain runs to 257 residues: Imidazole glycerol phosphate synthase subunit HisF (257 aa).

Active-site residues include aspartate 11 and aspartate 130.

It belongs to the HisA/HisF family. In terms of assembly, heterodimer of HisH and HisF.

Its subcellular location is the cytoplasm. It carries out the reaction 5-[(5-phospho-1-deoxy-D-ribulos-1-ylimino)methylamino]-1-(5-phospho-beta-D-ribosyl)imidazole-4-carboxamide + L-glutamine = D-erythro-1-(imidazol-4-yl)glycerol 3-phosphate + 5-amino-1-(5-phospho-beta-D-ribosyl)imidazole-4-carboxamide + L-glutamate + H(+). Its pathway is amino-acid biosynthesis; L-histidine biosynthesis; L-histidine from 5-phospho-alpha-D-ribose 1-diphosphate: step 5/9. In terms of biological role, IGPS catalyzes the conversion of PRFAR and glutamine to IGP, AICAR and glutamate. The HisF subunit catalyzes the cyclization activity that produces IGP and AICAR from PRFAR using the ammonia provided by the HisH subunit. This is Imidazole glycerol phosphate synthase subunit HisF from Francisella philomiragia subsp. philomiragia (strain ATCC 25017 / CCUG 19701 / FSC 153 / O#319-036).